A 355-amino-acid polypeptide reads, in one-letter code: Probable protein phosphatase 2C 21 (355 aa).

One can recognise a PPM-type phosphatase domain in the interval 23–329 (RFGLSSMQGW…DNMTIILVQF (307 aa)). Mn(2+) is bound by residues D57, G58, D272, and D320. The segment at 329-355 (FKKPNPSETEPEDSKPEPSEDEPSSSS) is disordered.

The protein belongs to the PP2C family. Requires Mg(2+) as cofactor. The cofactor is Mn(2+).

It carries out the reaction O-phospho-L-seryl-[protein] + H2O = L-seryl-[protein] + phosphate. The catalysed reaction is O-phospho-L-threonyl-[protein] + H2O = L-threonyl-[protein] + phosphate. The polypeptide is Probable protein phosphatase 2C 21 (PPC4-2) (Arabidopsis thaliana (Mouse-ear cress)).